Consider the following 934-residue polypeptide: Bifunctional uridylyltransferase/uridylyl-removing enzyme (934 aa).

The uridylyltransferase stretch occupies residues 1 to 379 (MSAHDLKLEE…TFSRRKRKLS (379 aa)). Residues 380–736 (ADGDFVSENH…AKPHTFEAVT (357 aa)) form a uridylyl-removing region. One can recognise an HD domain in the interval 496 to 613 (VDEHLLRCIA…IDFADTVQTM (118 aa)). ACT domains lie at 737–819 (EITV…VLAK) and 848–931 (VIEV…RSSQ).

This sequence belongs to the GlnD family. Requires Mg(2+) as cofactor.

The catalysed reaction is [protein-PII]-L-tyrosine + UTP = [protein-PII]-uridylyl-L-tyrosine + diphosphate. It catalyses the reaction [protein-PII]-uridylyl-L-tyrosine + H2O = [protein-PII]-L-tyrosine + UMP + H(+). With respect to regulation, uridylyltransferase (UTase) activity is inhibited by glutamine, while glutamine activates uridylyl-removing (UR) activity. Its function is as follows. Modifies, by uridylylation and deuridylylation, the PII regulatory proteins (GlnB and homologs), in response to the nitrogen status of the cell that GlnD senses through the glutamine level. Under low glutamine levels, catalyzes the conversion of the PII proteins and UTP to PII-UMP and PPi, while under higher glutamine levels, GlnD hydrolyzes PII-UMP to PII and UMP (deuridylylation). Thus, controls uridylylation state and activity of the PII proteins, and plays an important role in the regulation of nitrogen assimilation and metabolism. The protein is Bifunctional uridylyltransferase/uridylyl-removing enzyme of Brucella anthropi (strain ATCC 49188 / DSM 6882 / CCUG 24695 / JCM 21032 / LMG 3331 / NBRC 15819 / NCTC 12168 / Alc 37) (Ochrobactrum anthropi).